A 429-amino-acid chain; its full sequence is Cleavage stimulation factor subunit 50 (429 aa).

The hydrophobic stretch occupies residues 20–41 (LNALIVAHLRHHNLSQVASAVA). 7 WD repeats span residues 121–160 (EHKS…QMIS), 174–213 (DHAE…AKRA), 218–257 (QDTH…CFLP), 264–303 (GVSG…CVRS), 308–347 (HGKS…MVKE), 351–392 (AKRV…KVAK), and 396–429 (NHNG…KESV).

In terms of assembly, homodimer. Belongs to the CSTF complex. Forms a complex with cleavage and polyadenylation specificity factor (CPSF) subunits CSTF64, PABN3, CPSF30, FIPS5 and CPSF100.

It is found in the nucleus. In terms of biological role, one of the multiple factors required for polyadenylation and 3'-end cleavage of pre-mRNAs. May be responsible for the interaction of CSTF with other factors to form a stable complex on the pre-mRNA. The protein is Cleavage stimulation factor subunit 50 of Arabidopsis thaliana (Mouse-ear cress).